The sequence spans 235 residues: MQQHLKYKIMTNIKHLAIIMDGNARWADQHNLTKSEGHKAGADKIRELLPEFINLNIPYITLYTFSSENWQRSSTEVDFLIKLLSIYFKNELNSLHKNGVKIKVIGRLNLLSSSLQKQINNAIELTKNNNKITLCIAFSYGSRQEIVDACTKIIASGKKEISESDIGHALYDPEMPDVDLLIRPGGVYRISNFLLWQAAYAELYFSPKYWPAFNKDDIIEAINDYSKRKRTFGKR.

The active site involves aspartate 21. Aspartate 21 is a binding site for Mg(2+). Substrate-binding positions include 22-25 (GNAR), tryptophan 26, lysine 34, histidine 38, and 66-68 (SSE). Asparagine 69 functions as the Proton acceptor in the catalytic mechanism. Substrate-binding positions include tryptophan 70, arginine 72, arginine 183, and 189–191 (RIS). Glutamate 202 contacts Mg(2+).

Belongs to the UPP synthase family. As to quaternary structure, homodimer. Mg(2+) serves as cofactor.

Functionally, catalyzes the condensation of isopentenyl diphosphate (IPP) with allylic pyrophosphates generating different type of terpenoids. This is Isoprenyl transferase from Rickettsia felis (strain ATCC VR-1525 / URRWXCal2) (Rickettsia azadi).